Consider the following 361-residue polypeptide: G-protein coupled receptor 52 (361 aa).

The Extracellular segment spans residues 1-44 (MNDSRWTEWRILNTSSGILNVSERHSCPLGFGHYSAVDVCIFET). N-linked (GlcNAc...) asparagine glycans are attached at residues Asn-2, Asn-13, and Asn-20. A helical membrane pass occupies residues 45-65 (IVIVLLTFLIIAGNLTVIFVF). At 66–87 (HCAPLLHHYTTSYFIQTMAYAD) the chain is on the cytoplasmic side. Residues 88–108 (LFVGVSCLVPTLSLLHYSTGI) traverse the membrane as a helical segment. Residues 109–115 (HESLTCQ) lie on the Extracellular side of the membrane. A disulfide bridge connects residues Cys-114 and Cys-193. The helical transmembrane segment at 116 to 136 (VFGYIISVLKSVSMACLACIS) threads the bilayer. Topologically, residues 137-159 (VDRYLAITKPLSYNQLVTPCRLR) are cytoplasmic. A helical transmembrane segment spans residues 160-180 (ICIILIWIYSCLIFLPSFFGW). Over 181-200 (GKPGYHGDIFEWCATSWLTS) the chain is Extracellular. Residues 201-221 (AYFTGFIVCLLYAPAALVVCF) traverse the membrane as a helical segment. Residues 222–265 (TYFHIFKICRQHTKEINDRRARFPSHEAAASRDAGHSPDRRYAM) are Cytoplasmic-facing. The chain crosses the membrane as a helical span at residues 266–286 (VLFRITSVFYMLWLPYIIYFL). Residues 287-296 (LESSRVLDNP) lie on the Extracellular side of the membrane. The helical transmembrane segment at 297–317 (TLSFLTTWLAISNSFCNCVIY) threads the bilayer. The Cytoplasmic segment spans residues 318–361 (SLSNSVFRLGLRRLSETMCTSCMCVKDKEARDPKPRKRANSCSI).

The protein belongs to the G-protein coupled receptor 1 family.

It localises to the cell membrane. G- protein coupled receptor activated by antipsychotics reserpine leading to an increase in intracellular cAMP and its internalization. May play a role in locomotor activity through modulation of dopamine, NMDA and ADORA2A-induced locomotor activity. These behavioral changes are accompanied by modulation of the dopamine receptor signaling pathway in striatum. Modulates HTT level via cAMP-dependent but PKA independent mechanisms throught activation of RAB39B that translocates HTT to the endoplasmic reticulum, thus avoiding proteasome degradation. This Bos taurus (Bovine) protein is G-protein coupled receptor 52.